The following is a 188-amino-acid chain: UPF0301 protein Mmwyl1_0539 (188 aa).

It belongs to the UPF0301 (AlgH) family.

The chain is UPF0301 protein Mmwyl1_0539 from Marinomonas sp. (strain MWYL1).